The primary structure comprises 319 residues: MNYLDFEKPLAEIEGKAEELRAMARREEGMDVEEQAAALDKKAADLLRTLYADLTPWRKCQVARHAQRPHCQDYIDALFTEYTPLAGDRNFADDHAIMGGLARFDDTPVVVIGHEKGHDTKTRIERNFGMARPEGYRKAVRLMDLADRFNLPVITLVDTPGAYPGKGAEERGQSEAIARSTEKCLQIGVPLISVIIGEGGSGGAVAFATADRLAMLEHSVYSVISPEGCASILWKDAEKMREAAEALRLTAQDLHKLGVCDVVINEPLGGAQRNKDAAIESVGKAIASMLAGFGDADRATLIAGRRKKFLDLGSKGLAA.

One can recognise a CoA carboxyltransferase C-terminal domain in the interval 38 to 292 (ALDKKAADLL…GKAIASMLAG (255 aa)).

Belongs to the AccA family. Acetyl-CoA carboxylase is a heterohexamer composed of biotin carboxyl carrier protein (AccB), biotin carboxylase (AccC) and two subunits each of ACCase subunit alpha (AccA) and ACCase subunit beta (AccD).

The protein localises to the cytoplasm. The catalysed reaction is N(6)-carboxybiotinyl-L-lysyl-[protein] + acetyl-CoA = N(6)-biotinyl-L-lysyl-[protein] + malonyl-CoA. The protein operates within lipid metabolism; malonyl-CoA biosynthesis; malonyl-CoA from acetyl-CoA: step 1/1. Component of the acetyl coenzyme A carboxylase (ACC) complex. First, biotin carboxylase catalyzes the carboxylation of biotin on its carrier protein (BCCP) and then the CO(2) group is transferred by the carboxyltransferase to acetyl-CoA to form malonyl-CoA. This chain is Acetyl-coenzyme A carboxylase carboxyl transferase subunit alpha, found in Jannaschia sp. (strain CCS1).